Here is a 284-residue protein sequence, read N- to C-terminus: L-ribulose-5-phosphate 3-epimerase UlaE (284 aa).

Belongs to the L-ribulose-5-phosphate 3-epimerase family.

The enzyme catalyses L-ribulose 5-phosphate = L-xylulose 5-phosphate. It participates in cofactor degradation; L-ascorbate degradation; D-xylulose 5-phosphate from L-ascorbate: step 3/4. In terms of biological role, catalyzes the isomerization of L-xylulose-5-phosphate to L-ribulose-5-phosphate. Is involved in the anaerobic L-ascorbate utilization. This Salmonella choleraesuis (strain SC-B67) protein is L-ribulose-5-phosphate 3-epimerase UlaE.